The primary structure comprises 299 residues: tRNA pseudouridine synthase B (299 aa).

D49 serves as the catalytic Nucleophile. One can recognise a PUA domain in the interval 241 to 299; it reads MPRVTVSGRAAARVLHGVAPAVRVEHPDGTTVAVVAANGALLALAEADGGGLRLRKVFG.

It belongs to the pseudouridine synthase TruB family. Type 1 subfamily.

It carries out the reaction uridine(55) in tRNA = pseudouridine(55) in tRNA. Responsible for synthesis of pseudouridine from uracil-55 in the psi GC loop of transfer RNAs. This is tRNA pseudouridine synthase B from Symbiobacterium thermophilum (strain DSM 24528 / JCM 14929 / IAM 14863 / T).